Reading from the N-terminus, the 78-residue chain is Large ribosomal subunit protein uL24 (78 aa).

Belongs to the universal ribosomal protein uL24 family. As to quaternary structure, part of the 50S ribosomal subunit.

In terms of biological role, one of two assembly initiator proteins, it binds directly to the 5'-end of the 23S rRNA, where it nucleates assembly of the 50S subunit. Its function is as follows. One of the proteins that surrounds the polypeptide exit tunnel on the outside of the subunit. In Helicobacter hepaticus (strain ATCC 51449 / 3B1), this protein is Large ribosomal subunit protein uL24.